A 310-amino-acid chain; its full sequence is Junctional adhesion molecule C (310 aa).

The N-terminal stretch at 1–29 (MALSRRLRLRLYARLPDFFLLLLFRGCMI) is a signal peptide. Topologically, residues 30–241 (EAVNLKSSNR…GQDMEVYDLN (212 aa)) are extracellular. The Ig-like V-type domain occupies 35–127 (KSSNRNPVVH…VALNDRKEVD (93 aa)). Cystine bridges form between C53–C115 and C160–C219. Residues N104 and N192 are each glycosylated (N-linked (GlcNAc...) asparagine). One can recognise an Ig-like C2-type domain in the interval 139 to 236 (PVTPVCRIPA…AARCEGQDME (98 aa)). Residues 242 to 262 (IAGIIGGVLVVLIVLAVITMG) form a helical membrane-spanning segment. The Cytoplasmic portion of the chain corresponds to 263–310 (ICCAYRRGCFISSKQDGESYKSPGKHDGVNYIRTSEEGDFRHKSSFVI). 2 S-palmitoyl cysteine lipidation sites follow: C264 and C265.

It belongs to the immunoglobulin superfamily. As to quaternary structure, interacts with ITGAM. Interacts with GORASP2. Proteolytically cleaved from endothelial cells surface into a soluble form by ADAM10 and ADAM17; the release of soluble JAM3 is increased by pro-inflammatory factors. In terms of processing, N-glycosylated. Post-translationally, S-palmitoylated by ZDHHC7. S-palmitoylation promotes expression at tight junctions. In terms of tissue distribution, colocalizes with Jam2 near the lumen of seminiferous tubulues. Detected at junctional plaques that correspond to cell-cell contacts between spermatids and Sertoli cells. Detected on endothelial cells, in brain vessels and kidney glomeruli (at protein level). Detected in heart, lung, liver, kidney, testis, thymus, lymph node and Peyer patch. Endothelial cells.

Its subcellular location is the cell membrane. The protein localises to the cell junction. It is found in the desmosome. It localises to the tight junction. The protein resides in the secreted. Its function is as follows. Junctional adhesion protein that mediates heterotypic cell-cell interactions with its cognate receptor JAM2 to regulate different cellular processes. Plays a role in homing and mobilization of hematopoietic stem and progenitor cells within the bone marrow. At the surface of bone marrow stromal cells, it contributes to the retention of the hematopoietic stem and progenitor cells expressing JAM3. Plays a central role in leukocytes extravasation by facilitating transmigration through the endothelium. Plays a role in spermatogenesis where JAM2 and JAM3, which are respectively expressed by Sertoli and germ cells, mediate an interaction between both cell types and play an essential role in the anchorage of germ cells onto Sertoli cells and the assembly of cell polarity complexes during spermatid differentiation. Also functions as a counter-receptor for ITGAM, mediating leukocyte-platelet interactions and is involved in the regulation of transepithelial migration of polymorphonuclear neutrophils (PMN). Plays a role in angiogenesis. Plays a role in the regulation of cell migration. During myogenesis, it is involved in myocyte fusion. Functionally, promotes chemotaxis of vascular endothelial cells and stimulates angiogenesis. This Mus musculus (Mouse) protein is Junctional adhesion molecule C (Jam3).